The following is a 664-amino-acid chain: Macoilin (664 aa).

4 consecutive transmembrane segments (helical) span residues 28–48, 75–95, 120–140, and 154–174; these read TFLY…DFVL, AFSV…LLFI, VCLP…AIRF, and FAAH…KSYV. Residues 253–265 are compositionally biased toward basic and acidic residues; that stretch reads REKGKEKDKDAKK. Residues 253 to 274 are disordered; the sequence is REKGKEKDKDAKKHNLGINNNN. The residue at position 305 (S305) is a Phosphoserine. Polar residues predominate over residues 320–348; that stretch reads KNYKNASGVVNSSPRSHSATNGSIPSSSS. The interval 320–375 is disordered; sequence KNYKNASGVVNSSPRSHSATNGSIPSSSSKNEKKQKCTSKGPSAHKDLMENCIPNN. N-linked (GlcNAc...) asparagine glycosylation is present at N324. A Phosphoserine modification is found at S332. Residues N340 and N452 are each glycosylated (N-linked (GlcNAc...) asparagine). Positions 630 to 664 are disordered; it reads TSPLSPVSPHYSSKFVETSPSGLDPNASVYQPLKK. A phosphoserine mark is found at S631 and S634. N655 is a glycosylation site (N-linked (GlcNAc...) asparagine).

Belongs to the macoilin family. Strong expression in whole nervous system up to 12.5 dpc. Highly expressed in all neuronal differentiation fields from 14.5 dpc to birth, with highest expression in the telencephalic cortical plate and mitral cells in the olfactory bulb, and lower expression in neuronal progenitor zones. Progressively decreased expression in fields of neuron precursor proliferation from 14.5 dpc and virtually undetectable there by 17.5 dpc. No significant expression detected outside the nervous system. After birth, significant expression remains in the cerebellum, olfactory bulb and hippocampus.

Its subcellular location is the rough endoplasmic reticulum membrane. It localises to the nucleus membrane. Plays a role in the regulation of neuronal activity. This is Macoilin (Maco1) from Mus musculus (Mouse).